Here is a 604-residue protein sequence, read N- to C-terminus: Threonine--tRNA ligase (604 aa).

The segment at Asp-197 to Pro-499 is catalytic. Residues Cys-296, His-347, and His-476 each contribute to the Zn(2+) site.

It belongs to the class-II aminoacyl-tRNA synthetase family. In terms of assembly, homodimer. Zn(2+) is required as a cofactor.

It localises to the cytoplasm. The catalysed reaction is tRNA(Thr) + L-threonine + ATP = L-threonyl-tRNA(Thr) + AMP + diphosphate + H(+). Functionally, catalyzes the attachment of threonine to tRNA(Thr) in a two-step reaction: L-threonine is first activated by ATP to form Thr-AMP and then transferred to the acceptor end of tRNA(Thr). Also edits incorrectly charged L-seryl-tRNA(Thr). This is Threonine--tRNA ligase from Synechococcus elongatus (strain ATCC 33912 / PCC 7942 / FACHB-805) (Anacystis nidulans R2).